A 543-amino-acid chain; its full sequence is Steroid receptor seven-up, isoforms B/C (543 aa).

Residues 38 to 191 (PPHSAWHEPP…HSQSSNSGSQ (154 aa)) are disordered. The segment covering 56–68 (AASAGPGTTTGSV) has biased composition (low complexity). Polar residues predominate over residues 83–101 (QQSAVIKQDLSCPSLNQAG). Over residues 122–141 (GSAGGHHSGSGSGSGSGVNP) the composition is skewed to gly residues. Over residues 158–170 (MLTSIKGQPTGCG) the composition is skewed to polar residues. Residues 171 to 191 (STTPSSQANSSHSQSSNSGSQ) are compositionally biased toward low complexity. The segment at residues 197 to 272 (NIECVVCGDK…MGMRREAVQR (76 aa)) is a DNA-binding region (nuclear receptor). 2 NR C4-type zinc fingers span residues 200–220 (CVVC…CEGC) and 236–260 (CRGS…LKKC). Residues 307–532 (YLSSYISLLL…TLIRDMLLSG (226 aa)) enclose the NR LBD domain.

This sequence belongs to the nuclear hormone receptor family. NR2 subfamily. Expressed in several embryonic tissues; dorsal vessel, oenocyte and fat body. CNS expression is dynamic and confined to temporally restricted subsections of the NB lineage; expressed in many NB and GMCs, but only a small number of neurons.

It localises to the nucleus. In terms of biological role, receptor that is required in photoreceptors R1, R3, R4 and R6 during eye development; generation of the ganglion mother cell-2 (GMC-2) fate in the nb7-3 lineage, coinciding with the transition in the expression of HB to KR in the neuroblasts (NBs). In Drosophila melanogaster (Fruit fly), this protein is Steroid receptor seven-up, isoforms B/C (svp).